A 1219-amino-acid chain; its full sequence is Type IV pilus biogenesis factor PilY1 homolog PD_0502 (1219 aa).

Residues 1–35 form the signal peptide; sequence MVGMSRIILNNLFFFRCVVAVFSAHSLVISGAVHA. A disordered region spans residues 212–234; the sequence is GLSTDPLNTEGQPYDPSRHPLNS. Gln958, Asn960, Ile962, and Asp964 together coordinate Ca(2+).

The protein belongs to the PilY1 family.

The protein localises to the fimbrium. Its function is as follows. One of the three PilY1 homologs of X.fastidiosa, which are involved in bacterial twitching motility as component of the filamentous type IV pili (T4P). This chain is Type IV pilus biogenesis factor PilY1 homolog PD_0502, found in Xylella fastidiosa (strain Temecula1 / ATCC 700964).